The chain runs to 706 residues: ABC transporter D family member 2, chloroplastic (706 aa).

A chloroplast-targeting transit peptide spans 1–44 (MILMITAPVCPPHLLLRHSSLLRHESSIGNFHRKKNPRFRTVSC). The residue at position 45 (S45) is an N-acetylserine. Transmembrane regions (helical) follow at residues 88–108 (LAAV…FNFL), 124–144 (FTKQ…FFVL), 200–222 (TALS…SNIL), 237–257 (SFGG…LNFL), and 326–346 (ILPV…FGVI). The region spanning 88 to 372 (LAAVFALTLA…VVYQFQAISS (285 aa)) is the ABC transmembrane type-1 domain. Positions 430-697 (LEIEELTLQT…DAQDSLYGRL (268 aa)) constitute an ABC transporter domain. 464–471 (GPSGSGKT) serves as a coordination point for ATP. Positions 545–569 (TTPGGSNIDGSPPLLIREDGNEKPT) are disordered. Basic and acidic residues predominate over residues 560-569 (IREDGNEKPT).

Belongs to the ABC transporter superfamily. ABCD family. Peroxisomal fatty acyl CoA transporter (TC 3.A.1.203) subfamily. In terms of assembly, homodimer or heterodimer.

It localises to the membrane. The protein localises to the plastid. The protein resides in the chloroplast. This chain is ABC transporter D family member 2, chloroplastic (ABCC2), found in Arabidopsis thaliana (Mouse-ear cress).